We begin with the raw amino-acid sequence, 130 residues long: Small ribosomal subunit protein uS11c (130 aa).

It belongs to the universal ribosomal protein uS11 family. Part of the 30S ribosomal subunit.

Its subcellular location is the plastid. It is found in the chloroplast. This is Small ribosomal subunit protein uS11c from Pyropia yezoensis (Susabi-nori).